Reading from the N-terminus, the 1347-residue chain is G-protein coupled receptor-associated sorting protein 1 (1347 aa).

3 disordered regions span residues 1-75 (MTRA…AYAK), 145-174 (ESIP…SWYR), and 188-281 (DFKW…NSRS). Over residues 21 to 33 (ENANAAEVEPEAP) the composition is skewed to low complexity. Over residues 211-226 (FRPRKSMKANNRFRHM) the composition is skewed to basic residues. Residues 263–278 (PKDKTKVWSKPKEEPN) are compositionally biased toward basic and acidic residues. Ser295 carries the post-translational modification Phosphoserine. Disordered stretches follow at residues 310-344 (GEEA…AMSG), 364-396 (FSKS…QEAR), and 460-485 (QVSS…SKSM). A compositionally biased stretch (basic residues) spans 316–325 (RSKPRARKGV). The span at 370–396 (KKEPRTRAVPKEEVKTKARASTKQEAR) shows a compositional bias: basic and acidic residues. The segment covering 461–484 (VSSFCLGSGKKSSMESGPKATSKS) has biased composition (polar residues). Residues Ser619 and Ser626 each carry the phosphoserine modification. Thr860 bears the Phosphothreonine mark. A Phosphoserine modification is found at Ser862.

The protein belongs to the GPRASP family. As to quaternary structure, interacts with cytoplasmic tails of a variety of G-protein coupled receptors such as delta opioid receptor/OPRD1, beta-2 adrenergic receptor/ADRB2 and D4 dopamine receptor/DRD4 as well as D2 dopamine receptor/DRD2. Interacts with PER1. Interacts with BECN2; the interaction is direct. As to expression, expressed in the brain, with higher expression in the hippocampus, hypothalamus and olfactory bulb.

The protein resides in the cytoplasm. Its function is as follows. Modulates lysosomal sorting and functional down-regulation of a variety of G-protein coupled receptors. Targets receptors for degradation in lysosomes via its interaction with BECN2. The chain is G-protein coupled receptor-associated sorting protein 1 (Gprasp1) from Mus musculus (Mouse).